A 261-amino-acid polypeptide reads, in one-letter code: 8-demethyl-8-(2,3-dimethoxy-alpha-L-rhamnosyl)-tetracenomycin-C 4'-O-methyltransferase (261 aa).

Residues 53–54 (TM), 81–85 (ETGVW), 111–115 (DSFEG), Phe167, 185–186 (DG), and Ser191 contribute to the S-adenosyl-L-methionine site. A Mg(2+)-binding site is contributed by Asp185. Residues Asp212 and Asp213 each contribute to the Mg(2+) site.

This sequence belongs to the methyltransferase TylF/MycF family. The cofactor is Mg(2+).

The catalysed reaction is 8-demethyl-8-(2,3-di-O-methyl-alpha-L-rhamnosyl)-tetracenomycin C + S-adenosyl-L-methionine = 8-demethyl-8-(2,3,4-tri-O-methyl-alpha-L-rhamnosyl)-tetracenomycin C + S-adenosyl-L-homocysteine + H(+). Its pathway is antibiotic biosynthesis. O-methyltransferase involved in the biosynthesis of the permethylated L-rhamnose moiety of elloramycin, an antitumor polyketide. Mediates the methylation of the hydroxy groups at the 4'-position after the sugar moiety has been attached to the aglycon. The chain is 8-demethyl-8-(2,3-dimethoxy-alpha-L-rhamnosyl)-tetracenomycin-C 4'-O-methyltransferase from Streptomyces olivaceus.